Consider the following 532-residue polypeptide: Gag-Pol polyprotein (532 aa).

Gly2 is lipidated: N-myristoyl glycine; by host. Positions 7–31 (VLSGGELDRWEKIRLRPGGKKKYKL) are interaction with Gp41. The segment at 8 to 43 (LSGGELDRWEKIRLRPGGKKKYKLKHIVWASRELER) is interaction with host CALM1. The interval 12 to 19 (ELDRWEKI) is interaction with host AP3D1. An interaction with membrane phosphatidylinositol 4,5-bisphosphate and RNA region spans residues 14–33 (DRWEKIRLRPGGKKKYKLKH). Residues 16–22 (WEKIRLR) carry the Nuclear export signal motif. The Nuclear localization signal motif lies at 26 to 32 (KKKYKLK). The interval 73-77 (EELKS) is interaction with membrane phosphatidylinositol 4,5-bisphosphate. Positions 106-127 (EEQNKSKKKAQQAAADTGNSSK) are disordered. Tyr132 is subject to Phosphotyrosine; by host. The segment at 189–227 (NTVGGHQAAMQMLKETINEEAAEWDRLHPAQAGPIAPGQ) is interaction with human PPIA/CYPA and NUP153. The tract at residues 277–363 (YSPSSILDIR…GGPGHKARVL (87 aa)) is dimerization/Multimerization of capsid protein p24. CCHC-type zinc fingers lie at residues 390 to 407 (IKCFNCGKEGHLARNCRA) and 411 to 428 (KGCWKCGKEGHQMKDCNE). The interval 447–481 (EFSSEQTRANSPSRGELQVWGRDNNPLSEAGAERQ) is disordered. The segment covering 450-459 (SEQTRANSPS) has biased composition (polar residues). The dimerization of protease stretch occupies residues 489–493 (PQITL). The 25-residue stretch at 508 to 532 (KEALLDTGADDTVLEEMNSPGRWKP) folds into the Peptidase A2 domain. Asp513 acts as the For protease activity; shared with dimeric partner in catalysis.

In terms of assembly, homotrimer; further assembles as hexamers of trimers. Interacts with gp41 (via C-terminus). Interacts with host CALM1; this interaction induces a conformational change in the Matrix protein, triggering exposure of the myristate group. Interacts with host AP3D1; this interaction allows the polyprotein trafficking to multivesicular bodies during virus assembly. Part of the pre-integration complex (PIC) which is composed of viral genome, matrix protein, Vpr and integrase. Homodimer; the homodimer further multimerizes as homohexamers or homopentamers. Interacts with human PPIA/CYPA; This interaction stabilizes the capsid. Interacts with human NUP153. Interacts with host PDZD8; this interaction stabilizes the capsid. Interacts with monkey TRIM5; this interaction destabilizes the capsid. As to quaternary structure, homodimer, whose active site consists of two apposed aspartic acid residues. Post-translationally, specific enzymatic cleavages by the viral protease yield mature proteins. The protease is released by autocatalytic cleavage. The polyprotein is cleaved during and after budding, this process is termed maturation. Proteolytic cleavage of p66 RT removes the RNase H domain to yield the p51 RT subunit. Nucleocapsid protein p7 might be further cleaved after virus entry. Tyrosine phosphorylated presumably in the virion by a host kinase. Phosphorylation is apparently not a major regulator of membrane association. In terms of processing, phosphorylated possibly by host MAPK1; this phosphorylation is necessary for Pin1-mediated virion uncoating. Post-translationally, methylated by host PRMT6, impairing its function by reducing RNA annealing and the initiation of reverse transcription.

It is found in the host cell membrane. It localises to the host endosome. The protein localises to the host multivesicular body. Its subcellular location is the virion membrane. The protein resides in the host nucleus. It is found in the host cytoplasm. It localises to the virion. It carries out the reaction Specific for a P1 residue that is hydrophobic, and P1' variable, but often Pro.. Its activity is regulated as follows. The viral protease is inhibited by many synthetic protease inhibitors (PIs), such as amprenavir, atazanavir, indinavir, loprinavir, nelfinavir, ritonavir and saquinavir. Use of protease inhibitors in tritherapy regimens permit more ambitious therapeutic strategies. Functionally, mediates, with Gag polyprotein, the essential events in virion assembly, including binding the plasma membrane, making the protein-protein interactions necessary to create spherical particles, recruiting the viral Env proteins, and packaging the genomic RNA via direct interactions with the RNA packaging sequence (Psi). Gag-Pol polyprotein may regulate its own translation, by the binding genomic RNA in the 5'-UTR. At low concentration, the polyprotein would promote translation, whereas at high concentration, the polyprotein would encapsidate genomic RNA and then shut off translation. Targets the polyprotein to the plasma membrane via a multipartite membrane-binding signal, that includes its myristoylated N-terminus. Matrix protein is part of the pre-integration complex. Implicated in the release from host cell mediated by Vpu. Binds to RNA. In terms of biological role, forms the conical core that encapsulates the genomic RNA-nucleocapsid complex in the virion. Most core are conical, with only 7% tubular. The core is constituted by capsid protein hexamer subunits. The core is disassembled soon after virion entry. Host restriction factors such as TRIM5-alpha or TRIMCyp bind retroviral capsids and cause premature capsid disassembly, leading to blocks in reverse transcription. Capsid restriction by TRIM5 is one of the factors which restricts HIV-1 to the human species. Host PIN1 apparently facilitates the virion uncoating. On the other hand, interactions with PDZD8 or CYPA stabilize the capsid. Its function is as follows. Encapsulates and protects viral dimeric unspliced genomic RNA (gRNA). Binds these RNAs through its zinc fingers. Acts as a nucleic acid chaperone which is involved in rearangement of nucleic acid secondary structure during gRNA retrotranscription. Also facilitates template switch leading to recombination. As part of the polyprotein, participates in gRNA dimerization, packaging, tRNA incorporation and virion assembly. Functionally, aspartyl protease that mediates proteolytic cleavages of Gag and Gag-Pol polyproteins during or shortly after the release of the virion from the plasma membrane. Cleavages take place as an ordered, step-wise cascade to yield mature proteins. This process is called maturation. Displays maximal activity during the budding process just prior to particle release from the cell. Also cleaves Nef and Vif, probably concomitantly with viral structural proteins on maturation of virus particles. Hydrolyzes host EIF4GI and PABP1 in order to shut off the capped cellular mRNA translation. The resulting inhibition of cellular protein synthesis serves to ensure maximal viral gene expression and to evade host immune response. Also mediates cleavage of host YTHDF3. Mediates cleavage of host CARD8, thereby activating the CARD8 inflammasome, leading to the clearance of latent HIV-1 in patient CD4(+) T-cells after viral reactivation; in contrast, HIV-1 can evade CARD8-sensing when its protease remains inactive in infected cells prior to viral budding. In Homo sapiens (Human), this protein is Gag-Pol polyprotein (gag-pol).